We begin with the raw amino-acid sequence, 285 residues long: 3',5'-nucleoside bisphosphate phosphatase (285 aa).

Positions 7, 9, 14, 39, 64, and 75 each coordinate Mn(2+). 2 residues coordinate substrate: Asp-14 and His-39. Substrate-binding positions include 99-102 and 134-135; these read RLER and RT. 3 residues coordinate Mn(2+): His-191, Asp-248, and His-250. His-250 is a substrate binding site.

It belongs to the PHP family. Monomer. Mn(2+) serves as cofactor.

The catalysed reaction is a ribonucleoside 3',5'-bisphosphate + H2O = a ribonucleoside 5'-phosphate + phosphate. Functionally, hydrolyzes 3',5'-bisphosphonucleosides (pGp, pCp, pUp, and pIp) to nucleoside 5'-phosphate and orthophosphate. Has similar catalytic efficiencies with all the bases. Also shows activity with ribonucleoside 2'-deoxyribonucleoside 3',5'-bisphosphates. Does not show activity with nucleoside 2',5'-bisphosphates. This is 3',5'-nucleoside bisphosphate phosphatase from Chromobacterium violaceum (strain ATCC 12472 / DSM 30191 / JCM 1249 / CCUG 213 / NBRC 12614 / NCIMB 9131 / NCTC 9757 / MK).